We begin with the raw amino-acid sequence, 503 residues long: Probable cytosol aminopeptidase (503 aa).

Mn(2+) is bound by residues Lys-272 and Asp-277. Residue Lys-284 is part of the active site. Mn(2+) contacts are provided by Asp-295, Asp-354, and Glu-356. Arg-358 is an active-site residue.

This sequence belongs to the peptidase M17 family. Mn(2+) serves as cofactor.

It localises to the cytoplasm. It catalyses the reaction Release of an N-terminal amino acid, Xaa-|-Yaa-, in which Xaa is preferably Leu, but may be other amino acids including Pro although not Arg or Lys, and Yaa may be Pro. Amino acid amides and methyl esters are also readily hydrolyzed, but rates on arylamides are exceedingly low.. The catalysed reaction is Release of an N-terminal amino acid, preferentially leucine, but not glutamic or aspartic acids.. In terms of biological role, presumably involved in the processing and regular turnover of intracellular proteins. Catalyzes the removal of unsubstituted N-terminal amino acids from various peptides. The polypeptide is Probable cytosol aminopeptidase (Chlorobium limicola (strain DSM 245 / NBRC 103803 / 6330)).